Here is a 427-residue protein sequence, read N- to C-terminus: MLEIKYVRENIEEVKQALAKRAGKADFEGFARAEKKRRELLQQIEELRHQRNTVSDEIARMKRNKEDAGTSILEMRTVSDEIKTLDKTLAEQDDFIQQFMMAIPNMPHPDVPMGASDADNTLEKKVGTPRSFDFPIKAHWDIGEDLGILDFPRAAKITGARFSLYLGSGAKLERALINFMLDLHTNEHGYTETLPPFIVNRESLLGTGQLPKFEEDLFKIEGQEYYLIPTSEVPMTNIYRDEVLNEENLPIKFTAYTPCFRSEAGSYGKDTRGLIRQHQFNKVELVKYTTPETSYQELESLLANAETVLKRLGLPYQVVTLCSGDLGFSATRTYDIEVWMPGQDKYREISSCSNCEAFQARRANIKFRRAGQKKLEFVHTLNGSGLAVGRTVAAILENFQQPDGSVVIPEVLRPYMGGKETITNETR.

230–232 contacts L-serine; the sequence is TSE. An ATP-binding site is contributed by 261 to 263; the sequence is RSE. E284 is a binding site for L-serine. 348–351 is an ATP binding site; the sequence is EISS. S384 is a binding site for L-serine.

It belongs to the class-II aminoacyl-tRNA synthetase family. Type-1 seryl-tRNA synthetase subfamily. As to quaternary structure, homodimer. The tRNA molecule binds across the dimer.

The protein resides in the cytoplasm. It catalyses the reaction tRNA(Ser) + L-serine + ATP = L-seryl-tRNA(Ser) + AMP + diphosphate + H(+). The catalysed reaction is tRNA(Sec) + L-serine + ATP = L-seryl-tRNA(Sec) + AMP + diphosphate + H(+). The protein operates within aminoacyl-tRNA biosynthesis; selenocysteinyl-tRNA(Sec) biosynthesis; L-seryl-tRNA(Sec) from L-serine and tRNA(Sec): step 1/1. Functionally, catalyzes the attachment of serine to tRNA(Ser). Is also able to aminoacylate tRNA(Sec) with serine, to form the misacylated tRNA L-seryl-tRNA(Sec), which will be further converted into selenocysteinyl-tRNA(Sec). The chain is Serine--tRNA ligase from Desulforapulum autotrophicum (strain ATCC 43914 / DSM 3382 / VKM B-1955 / HRM2) (Desulfobacterium autotrophicum).